Reading from the N-terminus, the 600-residue chain is Novobiocin biosynthesis protein H (600 aa).

The interval 505–526 (GGKTDRAGLPDPVKATQPAGLG) is disordered. Residues 526–600 (GPRTPAEKVL…QLAAIATLEE (75 aa)) form the Carrier domain. Ser-561 is modified (O-(pantetheine 4'-phosphoryl)serine).

Belongs to the ATP-dependent AMP-binding enzyme family.

It participates in antibiotic biosynthesis; novobiocin biosynthesis. Its function is as follows. Together with NovI, involved in the formation of a beta-OH-Tyr intermediate in the novobiocin biosynthesis pathway, an aminocoumarin family antibiotic that targets bacterial DNA gyrases. The ATP-dependent AMP-binding region activates L-Tyr as L-tyrosyl-AMP and then transfers the L-tyrosyl group to the acyl carrier domain through thioester formation to form a tyrosyl-S intermediate that is covalently tethered to NovH (L-Tyr-S-NovH). The polypeptide is Novobiocin biosynthesis protein H (novH) (Streptomyces niveus (Streptomyces spheroides)).